The sequence spans 228 residues: Probable septum site-determining protein MinC (228 aa).

Belongs to the MinC family. In terms of assembly, interacts with MinD and FtsZ.

Functionally, cell division inhibitor that blocks the formation of polar Z ring septums. Rapidly oscillates between the poles of the cell to destabilize FtsZ filaments that have formed before they mature into polar Z rings. Prevents FtsZ polymerization. The sequence is that of Probable septum site-determining protein MinC from Bacillus cereus (strain B4264).